The following is a 111-amino-acid chain: WAP four-disulfide core domain protein 12 (111 aa).

The first 23 residues, 1-23, serve as a signal peptide directing secretion; sequence MGSSSFLVLMVSLVLVTLVAVEG. A WAP domain is found at 27–74; sequence GIEKAGVCPADNVRCFKSDPPQCHTDQDCLGERKCCYLHCGFKCVIPV. 4 disulfides stabilise this stretch: Cys-34-Cys-62, Cys-41-Cys-66, Cys-49-Cys-61, and Cys-55-Cys-70. Positions 80–111 are disordered; that stretch reads GGNKDEDVSRPYPEPGWEAKCPGSSSTRCPQK. Polar residues predominate over residues 102-111; sequence GSSSTRCPQK.

As to expression, highly expressed in prostate, skin, lung and esophagus. Weakly expressed in skeletal muscle, epididymis, kidney, trachea, salivary gland, testis and seminal vesicle.

The protein localises to the secreted. Functionally, antibacterial protein. Putative acid-stable proteinase inhibitor. This chain is WAP four-disulfide core domain protein 12 (WFDC12), found in Homo sapiens (Human).